The chain runs to 184 residues: Photosystem I assembly protein Ycf4 (184 aa).

2 helical membrane passes run 22 to 42 and 57 to 77; these read FCWA…GTSS and IVFF…LFIS.

It belongs to the Ycf4 family.

The protein localises to the plastid. It is found in the chloroplast thylakoid membrane. Seems to be required for the assembly of the photosystem I complex. In Lactuca sativa (Garden lettuce), this protein is Photosystem I assembly protein Ycf4.